The sequence spans 206 residues: Protein SUE1, mitochondrial (206 aa).

The transit peptide at 1–24 (MILLKRTKIRGVSVSFVSLQRRTH) directs the protein to the mitochondrion.

It is found in the mitochondrion envelope. Its function is as follows. Required for degradation of unstable forms of cytochrome c. This is Protein SUE1, mitochondrial from Saccharomyces cerevisiae (strain ATCC 204508 / S288c) (Baker's yeast).